Consider the following 551-residue polypeptide: Trigger factor (551 aa).

The region spanning 165 to 250 (GDLVVLDFAG…ATDVRVPGET (86 aa)) is the PPIase FKBP-type domain. The tract at residues 442 to 551 (ADDDTIGKGH…APAKKKAAAE (110 aa)) is disordered. Residues 458-472 (GHDHHDHDHDHDHAA) are compositionally biased toward basic and acidic residues. Residues 513–541 (EAAPAPKKAPAKKAAAAKAEEAPAAAPKK) show a composition bias toward low complexity. Positions 542 to 551 (APAKKKAAAE) are enriched in basic residues.

Belongs to the FKBP-type PPIase family. Tig subfamily.

The protein localises to the cytoplasm. The catalysed reaction is [protein]-peptidylproline (omega=180) = [protein]-peptidylproline (omega=0). In terms of biological role, involved in protein export. Acts as a chaperone by maintaining the newly synthesized protein in an open conformation. Functions as a peptidyl-prolyl cis-trans isomerase. This chain is Trigger factor, found in Rhizorhabdus wittichii (strain DSM 6014 / CCUG 31198 / JCM 15750 / NBRC 105917 / EY 4224 / RW1) (Sphingomonas wittichii).